Consider the following 352-residue polypeptide: Uroporphyrinogen decarboxylase (352 aa).

Residues 27-31, aspartate 77, tyrosine 154, threonine 209, and histidine 325 each bind substrate; that span reads RQAGR.

This sequence belongs to the uroporphyrinogen decarboxylase family. As to quaternary structure, homodimer.

The protein localises to the cytoplasm. It carries out the reaction uroporphyrinogen III + 4 H(+) = coproporphyrinogen III + 4 CO2. It functions in the pathway porphyrin-containing compound metabolism; protoporphyrin-IX biosynthesis; coproporphyrinogen-III from 5-aminolevulinate: step 4/4. Functionally, catalyzes the decarboxylation of four acetate groups of uroporphyrinogen-III to yield coproporphyrinogen-III. This chain is Uroporphyrinogen decarboxylase, found in Legionella pneumophila (strain Paris).